We begin with the raw amino-acid sequence, 419 residues long: Synaptotagmin-1 (419 aa).

The Vesicular portion of the chain corresponds to 1-57; that stretch reads MVSESHHEALAAPPVTTVATVLPSNATEPASPGEGKEDAFSKLKEKFMNELHKIPLP. Asn25 is a glycosylation site (N-linked (GlcNAc...) asparagine). The helical transmembrane segment at 58–80 threads the bilayer; that stretch reads PWALIAIAIVAVLLVLTCCFCIC. Residues Cys75, Cys76, Cys78, Cys80, and Cys83 are each lipidated (S-palmitoyl cysteine). Topologically, residues 81–419 are cytoplasmic; it reads KKCLFKKKNK…EVDAMLAVKK (339 aa). Residues 108-139 are disordered; it reads KDLGKTMKDQDDDAETGLTDGEEKEEPKEEEK. Acidic residues predominate over residues 117–131; the sequence is QDDDAETGLTDGEEK. Thr126 is modified (phosphothreonine). Positions 133–379 are phospholipid binding; sequence EPKEEEKLGK…AIGKVFVGYN (247 aa). A C2 1 domain is found at 139–258; sequence KLGKLQYSLD…DFGHVTEEWR (120 aa). Residues Leu169, Asp170, and Asp176 each contribute to the Ca(2+) site. A Phosphotyrosine modification is found at Tyr227. Residues Asp228, Phe229, Asp230, Ser233, Lys234, and Asp236 each coordinate Ca(2+). Ser262 carries the phosphoserine modification. One can recognise a C2 2 domain in the interval 270 to 403; sequence KLGDICFSLR…NPRRPIAQWH (134 aa). Positions 301 and 307 each coordinate Ca(2+). Phosphoserine is present on residues Ser340 and Ser342. Residues Asp361, Asp363, and Asp369 each coordinate Ca(2+).

This sequence belongs to the synaptotagmin family. In terms of assembly, homotetramer. Heterodimer; heterodimerizes with SYT2 in presence of calcium. Interacts with SCAMP5. Interacts with STON2. Forms a complex with SV2B, syntaxin 1 and SNAP25. Interacts with SV2A, SV2B and SV2C. Interacts with RIMS1. Interacts with PRRT2. Interacts with DNAJC5 in a phosphorylation-dependent manner. Interacts (via N-terminus) with RAB3A. Interacts with SYT12. Interacts with calmodulin. Interacts with DNM1 (via C-terminal proline-rich domain (PRD)); this interaction facilitates vesicle fission during clathrin-mediated endocytosis (CME). Ca(2+) is required as a cofactor. Glycosylated.

It localises to the cytoplasmic vesicle. It is found in the secretory vesicle membrane. Its subcellular location is the secretory vesicle. The protein resides in the synaptic vesicle membrane. The protein localises to the chromaffin granule membrane. It localises to the cytoplasm. Calcium sensor that participates in triggering neurotransmitter release at the synapse. May have a regulatory role in the membrane interactions during trafficking of synaptic vesicles at the active zone of the synapse. It binds acidic phospholipids with a specificity that requires the presence of both an acidic head group and a diacyl backbone. A Ca(2+)-dependent interaction between synaptotagmin and putative receptors for activated protein kinase C has also been reported. It can bind to at least three additional proteins in a Ca(2+)-independent manner; these are neurexins, syntaxin and AP2. Plays a role in dendrite formation by melanocytes. This chain is Synaptotagmin-1, found in Macaca fascicularis (Crab-eating macaque).